The sequence spans 201 residues: Ribosome maturation factor RimM (201 aa).

One can recognise a PRC barrel domain in the interval 92–166; the sequence is DEDEFYHADL…RVVVEPPANF (75 aa). Residues 169 to 201 form a disordered region; the sequence is PAGPQPAEGEEMPDGALEALEGEEAGAGTAPQP.

Belongs to the RimM family. In terms of assembly, binds ribosomal protein uS19.

It is found in the cytoplasm. Functionally, an accessory protein needed during the final step in the assembly of 30S ribosomal subunit, possibly for assembly of the head region. Essential for efficient processing of 16S rRNA. May be needed both before and after RbfA during the maturation of 16S rRNA. It has affinity for free ribosomal 30S subunits but not for 70S ribosomes. This chain is Ribosome maturation factor RimM, found in Rhodospirillum centenum (strain ATCC 51521 / SW).